The chain runs to 349 residues: Biotin synthase (349 aa).

The region spanning 70–295 is the Radical SAM core domain; sequence PEVEVEGIIS…RTMLRFAGGR (226 aa). [4Fe-4S] cluster is bound by residues C85, C89, and C92. Positions 128, 161, 220, and 290 each coordinate [2Fe-2S] cluster.

It belongs to the radical SAM superfamily. Biotin synthase family. In terms of assembly, homodimer. [4Fe-4S] cluster is required as a cofactor. It depends on [2Fe-2S] cluster as a cofactor.

It catalyses the reaction (4R,5S)-dethiobiotin + (sulfur carrier)-SH + 2 reduced [2Fe-2S]-[ferredoxin] + 2 S-adenosyl-L-methionine = (sulfur carrier)-H + biotin + 2 5'-deoxyadenosine + 2 L-methionine + 2 oxidized [2Fe-2S]-[ferredoxin]. It functions in the pathway cofactor biosynthesis; biotin biosynthesis; biotin from 7,8-diaminononanoate: step 2/2. Functionally, catalyzes the conversion of dethiobiotin (DTB) to biotin by the insertion of a sulfur atom into dethiobiotin via a radical-based mechanism. The protein is Biotin synthase of Mycobacterium bovis (strain ATCC BAA-935 / AF2122/97).